The following is a 157-amino-acid chain: Small ribosomal subunit protein uS7 (157 aa).

It belongs to the universal ribosomal protein uS7 family. Part of the 30S ribosomal subunit. Contacts proteins S9 and S11.

In terms of biological role, one of the primary rRNA binding proteins, it binds directly to 16S rRNA where it nucleates assembly of the head domain of the 30S subunit. Is located at the subunit interface close to the decoding center, probably blocks exit of the E-site tRNA. The chain is Small ribosomal subunit protein uS7 from Caldicellulosiruptor bescii (strain ATCC BAA-1888 / DSM 6725 / KCTC 15123 / Z-1320) (Anaerocellum thermophilum).